The chain runs to 399 residues: Probable 3-ketosteroid-9-alpha-monooxygenase, oxygenase component (399 aa).

The Rieske domain occupies 26–128 (WHCLGLVRDF…VAEVSGQLFV (103 aa)). [2Fe-2S] cluster contacts are provided by Cys-67, His-69, Cys-86, and His-89. Asn-175, His-181, His-186, and Asp-307 together coordinate Fe cation.

As to quaternary structure, homotrimer. The two-component system 3-ketosteroid-9-alpha-monooxygenase is composed of an oxygenase component KshA and a reductase component KshB. The cofactor is [2Fe-2S] cluster. Fe cation serves as cofactor.

In terms of biological role, could catalyze the introduction of a 9alpha-hydroxyl moiety into the ring B of 3-ketosteroid substrates. This chain is Probable 3-ketosteroid-9-alpha-monooxygenase, oxygenase component, found in Rhodococcus rhodochrous.